Here is a 363-residue protein sequence, read N- to C-terminus: MFAFTPYSSFWVELRKITSLQLLSSRRLELLKHVRISEMEISMKQLYKIWSKKKDGSGRVLVEMKKLFGDLTLNVVLRMVAGKRYFGGGNANDDEEARRCRRVWREFFRLHGVFVVADSLPFLRWLDLGGYEKAMKKTAKEMDNIVSGWLEEHRMKRNSSDEDNTQQDFMDVMLSAVKNVDLCGFDADVVIKSTCMVLIASGTDTVGVELTWALSLLLNNRHALKKAQEELDNVVGKQRQVKESDLNNLVYLHAIIKETLRLYPAAQLGVRREFYEDCTVAGYHVPKGTLLAVNLWTLHRDPIIWSDPTEFRPERFLNMPKEVDVKGQHFELIPFGVGRRLCPGIAFGLQMLHLVLATLLHGF.

A heme-binding site is contributed by C342.

It belongs to the cytochrome P450 family. Heme serves as cofactor.

Its function is as follows. Probable heme-thiolate monooxygenase. This Panax ginseng (Korean ginseng) protein is Cytochrome P450 CYP82D47.